A 353-amino-acid polypeptide reads, in one-letter code: Paraneoplastic antigen Ma1 homolog (353 aa).

The protein belongs to the PNMA family.

It localises to the nucleus. Its subcellular location is the nucleolus. The protein is Paraneoplastic antigen Ma1 homolog (PNMA1) of Bos taurus (Bovine).